The primary structure comprises 112 residues: Integration host factor subunit alpha (112 aa).

The protein belongs to the bacterial histone-like protein family. In terms of assembly, heterodimer of an alpha and a beta chain.

In terms of biological role, this protein is one of the two subunits of integration host factor, a specific DNA-binding protein that functions in genetic recombination as well as in transcriptional and translational control. The sequence is that of Integration host factor subunit alpha from Agrobacterium fabrum (strain C58 / ATCC 33970) (Agrobacterium tumefaciens (strain C58)).